The primary structure comprises 213 residues: Agglutinin isolectin 2 (213 aa).

The first 27 residues, 1-27 (MRKMMSTMALTLGAAVFLAFAAATAQA), serve as a signal peptide directing secretion. The residue at position 28 (Gln-28) is a Pyrrolidone carboxylic acid. Chitin-binding type-1 domains are found at residues 28–69 (QRCG…ACWT), 70–112 (SKRC…PCRA), 113–155 (DIKC…ACST), and 156–198 (DKPC…GCDA). Cystine bridges form between Cys-30–Cys-45, Cys-39–Cys-51, Cys-44–Cys-58, Cys-62–Cys-67, Cys-73–Cys-88, Cys-82–Cys-94, Cys-87–Cys-101, Cys-105–Cys-110, Cys-116–Cys-131, Cys-125–Cys-137, Cys-130–Cys-144, Cys-148–Cys-153, Cys-159–Cys-174, Cys-168–Cys-180, Cys-173–Cys-187, and Cys-191–Cys-196. Residue 37–39 (MEC) coordinates substrate. Residue 89-100 (SQYGHCGFGAEY) participates in substrate binding. 141 to 142 (SE) contributes to the substrate binding site. Positions 199–213 (VFAGAITANSTLLAE) are excised as a propeptide.

Homodimer, u-shaped.

Its function is as follows. N-acetyl-D-glucosamine / N-acetyl-D-neuraminic acid binding lectin. This chain is Agglutinin isolectin 2, found in Triticum aestivum (Wheat).